Consider the following 288-residue polypeptide: ATP synthase gamma chain (288 aa).

It belongs to the ATPase gamma chain family. F-type ATPases have 2 components, CF(1) - the catalytic core - and CF(0) - the membrane proton channel. CF(1) has five subunits: alpha(3), beta(3), gamma(1), delta(1), epsilon(1). CF(0) has three main subunits: a, b and c.

The protein resides in the cell inner membrane. Its function is as follows. Produces ATP from ADP in the presence of a proton gradient across the membrane. The gamma chain is believed to be important in regulating ATPase activity and the flow of protons through the CF(0) complex. The sequence is that of ATP synthase gamma chain from Rickettsia bellii (strain OSU 85-389).